We begin with the raw amino-acid sequence, 536 residues long: Ecdysone receptor (536 aa).

The modulating stretch occupies residues 1–114 (MKTENLIVTT…GPVPRQQEEL (114 aa)). Positions 77–107 (SPNSKLDDGNMSVHMGDGLDGKKSSSKKGPV) are disordered. NR C4-type zinc fingers lie at residues 115–135 (CLVCGDRASGYHYNALTCEGC) and 151–175 (CKFGHECEMDMYMRRKCQECRLKKC). The nuclear receptor DNA-binding region spans 115–187 (CLVCGDRASG…VGMRPECVVP (73 aa)). An NR LBD domain is found at 278 to 514 (NQVAVIYKLI…FLEEVWDVGD (237 aa)).

This sequence belongs to the nuclear hormone receptor family. NR1 subfamily.

It is found in the nucleus. Its function is as follows. Receptor for ecdysone. Binds to ecdysone response elements (ECRES). The protein is Ecdysone receptor (EcR) of Chironomus tentans (Midge).